Consider the following 310-residue polypeptide: AMMECR1-like protein (310 aa).

Positions 26–95 (LSGSGTHSHG…LSPLPRPNGT (70 aa)) are disordered. The segment covering 28–66 (GSGTHSHGNQSTTVPGSSSGPLQNHQHVDSSSGRENVSD) has biased composition (polar residues). Position 74 is a phosphoserine (Ser74). One can recognise an AMMECR1 domain in the interval 97–291 (NTTKNLVVTA…ISYAEYIASR (195 aa)).

The protein is AMMECR1-like protein (AMMECR1L) of Homo sapiens (Human).